A 602-amino-acid chain; its full sequence is Elongation factor 4 (602 aa).

The 182-residue stretch at 7 to 188 (ENIRNFSIIA…AIIELIPPPK (182 aa)) folds into the tr-type G domain. GTP is bound by residues 19-24 (DHGKST) and 135-138 (NKID).

It belongs to the TRAFAC class translation factor GTPase superfamily. Classic translation factor GTPase family. LepA subfamily.

It is found in the cell inner membrane. It catalyses the reaction GTP + H2O = GDP + phosphate + H(+). Its function is as follows. Required for accurate and efficient protein synthesis under certain stress conditions. May act as a fidelity factor of the translation reaction, by catalyzing a one-codon backward translocation of tRNAs on improperly translocated ribosomes. Back-translocation proceeds from a post-translocation (POST) complex to a pre-translocation (PRE) complex, thus giving elongation factor G a second chance to translocate the tRNAs correctly. Binds to ribosomes in a GTP-dependent manner. In Chlamydia caviae (strain ATCC VR-813 / DSM 19441 / 03DC25 / GPIC) (Chlamydophila caviae), this protein is Elongation factor 4.